Reading from the N-terminus, the 378-residue chain is MSFEGKTITCKAAVAWGAKEPLSIEDIQVAPPKAHEVRVKVDWSAVCHTDAYTLSGVDPEGAFPIVLGHEGAGIVESIGEGVINVRPGDHVILLYTPECKECKFCRSGKTNLCSKIRETQGRGLMPDGTSRFSCRDKTLLHYMGCSSFSQYTVVADISLVAISHSAPLRSICLLGCGVTTGFGAVTHSAKVESGSTVAVVGCGCVGLAAMQGAVAAGASRIIAIDINADKEVYAKKFGATDFIDSSKVKDLVQYVIDVTDGGVDYAFDCTGNVTVMQQELQFCHKGWGKLCVIGVAAAGKTLDFRPFLVVTGRQVLGSAFGGVKGRSELPNFVDEYMQGHFKVDEYITNEEPLKNINKAFDHMHEGKCIRCVVDMNKP.

A Zn(2+)-binding site is contributed by cysteine 47. Histidine 48 is a binding site for NAD(+). 7 residues coordinate Zn(2+): histidine 69, glutamate 70, cysteine 99, cysteine 102, cysteine 105, cysteine 113, and cysteine 176. NAD(+) contacts are provided by residues 201 to 206 (GCGCVG), aspartate 225, 293 to 295 (IGV), and 318 to 320 (SAF).

This sequence belongs to the zinc-containing alcohol dehydrogenase family. Class-III subfamily. Zn(2+) is required as a cofactor.

The enzyme catalyses a primary alcohol + NAD(+) = an aldehyde + NADH + H(+). The catalysed reaction is a secondary alcohol + NAD(+) = a ketone + NADH + H(+). It catalyses the reaction S-(hydroxymethyl)glutathione + NADP(+) = S-formylglutathione + NADPH + H(+). It carries out the reaction S-(hydroxymethyl)glutathione + NAD(+) = S-formylglutathione + NADH + H(+). The enzyme catalyses S-nitrosoglutathione + NADH + H(+) = S-(hydroxysulfenamide)glutathione + NAD(+). Oxidizes long-chain alcohols and, in the presence of glutathione, is able to oxidize formaldehyde. Also acts as a S-nitroso-glutathione reductase by catalyzing the NADH-dependent reduction of S-nitrosoglutathione, thereby regulating protein S-nitrosylation. In Schizosaccharomyces pombe (strain 972 / ATCC 24843) (Fission yeast), this protein is Probable S-(hydroxymethyl)glutathione dehydrogenase 1.